We begin with the raw amino-acid sequence, 446 residues long: Glutamine synthetase (446 aa).

The GS beta-grasp domain maps to glutamate 15 to glycine 103. In terms of domain architecture, GS catalytic spans proline 110–tyrosine 446. Glutamate 134 and glutamate 136 together coordinate Mg(2+). Glutamate 186 contacts ATP. Glutamate 191 and glutamate 198 together coordinate Mg(2+). L-glutamate contacts are provided by residues asparagine 242–glycine 243 and glycine 243. Histidine 247 contacts Mg(2+). Serine 251 provides a ligand contact to ATP. L-glutamate contacts are provided by arginine 300, glutamate 306, and arginine 318. Positions 318 and 323 each coordinate ATP. Glutamate 335 contacts Mg(2+). Arginine 337 is a binding site for L-glutamate.

The protein belongs to the glutamine synthetase family. Interacts with GCBP (TTHA1554). It depends on Mg(2+) as a cofactor.

The protein localises to the cytoplasm. The catalysed reaction is L-glutamate + NH4(+) + ATP = L-glutamine + ADP + phosphate + H(+). Its activity is regulated as follows. Activity increases by approximately two-fold in the presence of GCBP. In terms of biological role, catalyzes the ATP-dependent biosynthesis of glutamine from glutamate and ammonia. The chain is Glutamine synthetase from Thermus thermophilus (strain ATCC 27634 / DSM 579 / HB8).